Reading from the N-terminus, the 877-residue chain is DNA polymerase I (877 aa).

A 5'-3' exonuclease domain is found at 1 to 310; the sequence is MKKKLVLIDG…FTLADRVTEE (310 aa). One can recognise a 3'-5' exonuclease domain in the interval 311–465; it reads MLADKAALVV…ALERPFLDEL (155 aa). Residues 469–877 form a polymerase region; that stretch reads EQDRLLVELE…HYGSTWYDAK (409 aa).

This sequence belongs to the DNA polymerase type-A family. Single-chain monomer with multiple functions.

It carries out the reaction DNA(n) + a 2'-deoxyribonucleoside 5'-triphosphate = DNA(n+1) + diphosphate. Functionally, in addition to polymerase activity, this DNA polymerase exhibits 3'-5' and 5'-3' exonuclease activity. The protein is DNA polymerase I (polA) of Bacillus caldotenax.